Here is a 63-residue protein sequence, read N- to C-terminus: Sarcotoxin-1A (63 aa).

Residues 1 to 23 (MNFQNIFIFVALILAVFAGQSQA) form the signal peptide. Arg-62 is modified (arginine amide).

It belongs to the cecropin family.

The protein resides in the secreted. Its function is as follows. Sarcotoxins, which are potent bactericidal proteins, are produced in response to injury. They are cytotoxic to both Gram-positive and Gram-negative bacteria. The chain is Sarcotoxin-1A from Sarcophaga peregrina (Flesh fly).